We begin with the raw amino-acid sequence, 78 residues long: DNA-directed RNA polymerase subunit omega (78 aa).

This sequence belongs to the RNA polymerase subunit omega family. In terms of assembly, in cyanobacteria the RNAP catalytic core is composed of 2 alpha, 1 beta, 1 beta', 1 gamma and 1 omega subunit. When a sigma factor is associated with the core the holoenzyme is formed, which can initiate transcription.

It carries out the reaction RNA(n) + a ribonucleoside 5'-triphosphate = RNA(n+1) + diphosphate. Functionally, promotes RNA polymerase assembly. Latches the N- and C-terminal regions of the beta' subunit thereby facilitating its interaction with the beta and alpha subunits. In Trichormus variabilis (strain ATCC 29413 / PCC 7937) (Anabaena variabilis), this protein is DNA-directed RNA polymerase subunit omega.